A 234-amino-acid chain; its full sequence is Glucosamine-6-phosphate deaminase (234 aa).

The active-site Proton acceptor; for enolization step is Asp62. The active-site For ring-opening step is Asn128. His130 acts as the Proton acceptor; for ring-opening step in catalysis. Glu135 functions as the For ring-opening step in the catalytic mechanism.

It belongs to the glucosamine/galactosamine-6-phosphate isomerase family. NagB subfamily.

It carries out the reaction alpha-D-glucosamine 6-phosphate + H2O = beta-D-fructose 6-phosphate + NH4(+). The protein operates within amino-sugar metabolism; N-acetylneuraminate degradation; D-fructose 6-phosphate from N-acetylneuraminate: step 5/5. In terms of biological role, catalyzes the reversible isomerization-deamination of glucosamine 6-phosphate (GlcN6P) to form fructose 6-phosphate (Fru6P) and ammonium ion. The protein is Glucosamine-6-phosphate deaminase of Streptococcus equi subsp. zooepidemicus (strain H70).